The primary structure comprises 524 residues: 11-oxo-beta-amyrin 30-oxidase (524 aa).

Residues 9–29 (GTTVIISVLSVLLAVIPWYLL) form a helical membrane-spanning segment. Residue Cys472 coordinates heme.

It belongs to the cytochrome P450 family. The cofactor is heme. In terms of tissue distribution, expressed in flowers. Detected in roots upon salt treatment.

It localises to the membrane. The catalysed reaction is 11-oxo-beta-amyrin + 3 reduced [NADPH--hemoprotein reductase] + 3 O2 = glycyrrhetinate + 3 oxidized [NADPH--hemoprotein reductase] + 4 H2O + 4 H(+). Functionally, involved in the biosynthesis of triterpenoid saponins. Catalyzes three sequential oxidation steps at C-30 of 11-oxo-beta-amyrin. Also able to catalyze sequential C-30 hydroxylation of beta-amyrin to produce 30-hydroxy-beta-amyrin and 11-deoxoglycyrrhetinic acid. The sequence is that of 11-oxo-beta-amyrin 30-oxidase (CYP72A63) from Medicago truncatula (Barrel medic).